We begin with the raw amino-acid sequence, 602 residues long: Elongation factor 4 (602 aa).

In terms of domain architecture, tr-type G spans 7–189 (RKIRNFSIIA…AIVKNIPPPT (183 aa)). Residues 19-24 (DHGKST) and 136-139 (NKID) contribute to the GTP site.

Belongs to the TRAFAC class translation factor GTPase superfamily. Classic translation factor GTPase family. LepA subfamily.

It is found in the cell membrane. It carries out the reaction GTP + H2O = GDP + phosphate + H(+). Required for accurate and efficient protein synthesis under certain stress conditions. May act as a fidelity factor of the translation reaction, by catalyzing a one-codon backward translocation of tRNAs on improperly translocated ribosomes. Back-translocation proceeds from a post-translocation (POST) complex to a pre-translocation (PRE) complex, thus giving elongation factor G a second chance to translocate the tRNAs correctly. Binds to ribosomes in a GTP-dependent manner. This is Elongation factor 4 from Alkaliphilus metalliredigens (strain QYMF).